The primary structure comprises 138 residues: Ribulose bisphosphate carboxylase small subunit (138 aa).

Belongs to the RuBisCO small chain family. Heterohexadecamer of 8 large and 8 small subunits.

It is found in the plastid. It localises to the chloroplast. RuBisCO catalyzes two reactions: the carboxylation of D-ribulose 1,5-bisphosphate, the primary event in carbon dioxide fixation, as well as the oxidative fragmentation of the pentose substrate in the photorespiration process. Both reactions occur simultaneously and in competition at the same active site. Although the small subunit is not catalytic it is essential for maximal activity. This is Ribulose bisphosphate carboxylase small subunit from Pyropia katadae (Red alga).